A 518-amino-acid chain; its full sequence is DNA-(apurinic or apyrimidinic site) endonuclease 2 (518 aa).

Mg(2+) contacts are provided by N8 and E48. Residue Y156 is part of the active site. Mg(2+) contacts are provided by D197, N199, D303, and H304. D197 (proton donor/acceptor) is an active-site residue. H304 serves as the catalytic Proton acceptor. Residues 355–405 show a composition bias toward polar residues; sequence STLQHNNQTRVQTCQNKAQVRSTRPQPSQVGSSRGQKNLKSYFQPSPSCPQ. The segment at 355 to 407 is disordered; it reads STLQHNNQTRVQTCQNKAQVRSTRPQPSQVGSSRGQKNLKSYFQPSPSCPQAS. K371 participates in a covalent cross-link: Glycyl lysine isopeptide (Lys-Gly) (interchain with G-Cter in ubiquitin). Residues 390 to 397 are required for the interaction and colocalization with PCNA in nuclear foci in presence of oxidative-induced DNA damaging agents; the sequence is QKNLKSYF. Zn(2+)-binding residues include C469, H472, C495, and C509. The GRF-type zinc finger occupies 469–518; it reads CGGHREPCVMRTVKKPGPNLGRRFYMCARPRGPPTDPSSRCNFFLWSRPS.

The protein belongs to the DNA repair enzymes AP/ExoA family. Interacts with PCNA; this interaction is triggered by reactive oxygen species and increased by misincorporation of uracil in nuclear DNA. Mg(2+) serves as cofactor. It depends on Mn(2+) as a cofactor. Post-translationally, ubiquitinated by the CUL9-RBX1 complex. Ubiquitinated by MKRN3 at Lys-371 leading to proteasomal degradation. In terms of tissue distribution, highly expressed in brain and kidney. Weakly expressed in the fetal brain.

It is found in the nucleus. The protein resides in the cytoplasm. Its subcellular location is the mitochondrion. The catalysed reaction is Exonucleolytic cleavage in the 3'- to 5'-direction to yield nucleoside 5'-phosphates.. Its activity is regulated as follows. 3'-5' exonuclease activity is activated by sodium and manganese. 3'-5' exonuclease and 3'-phosphodiesterase activities are stimulated in presence of PCNA. Its function is as follows. Functions as a weak apurinic/apyrimidinic (AP) endodeoxyribonuclease in the DNA base excision repair (BER) pathway of DNA lesions induced by oxidative and alkylating agents. Initiates repair of AP sites in DNA by catalyzing hydrolytic incision of the phosphodiester backbone immediately adjacent to the damage, generating a single-strand break with 5'-deoxyribose phosphate and 3'-hydroxyl ends. Also displays double-stranded DNA 3'-5' exonuclease, 3'-phosphodiesterase activities. Shows robust 3'-5' exonuclease activity on 3'-recessed heteroduplex DNA and is able to remove mismatched nucleotides preferentially. Also exhibits 3'-5' exonuclease activity on a single nucleotide gap containing heteroduplex DNA and on blunt-ended substrates. Shows fairly strong 3'-phosphodiesterase activity involved in the removal of 3'-damaged termini formed in DNA by oxidative agents. In the nucleus functions in the PCNA-dependent BER pathway. Plays a role in reversing blocked 3' DNA ends, problematic lesions that preclude DNA synthesis. Required for somatic hypermutation (SHM) and DNA cleavage step of class switch recombination (CSR) of immunoglobulin genes. Required for proper cell cycle progression during proliferation of peripheral lymphocytes. The chain is DNA-(apurinic or apyrimidinic site) endonuclease 2 (APEX2) from Homo sapiens (Human).